Consider the following 279-residue polypeptide: GATA transcription factor 15 (279 aa).

Residues 52-94 (AYDDHSTVTTSPSSPSSSSTGSVDCTLSLGTPSSRRAEPVAAA) form a disordered region. Residues 58 to 74 (TVTTSPSSPSSSSTGSV) show a composition bias toward low complexity. The segment at 154 to 179 (CANCGTASTPLWRNGPRGPKSLCNAC) adopts a GATA-type zinc-finger fold.

Belongs to the type IV zinc-finger family. Class B subfamily. Highly expressed in inflorescences. Expressed in vascular bundles of root stele within the elongation zones, of elongating upper internodes and of the junctions of leaf blades and sheaths.

Its function is as follows. Probable transcription factor that regulates organogenesis during transition from the vegetative to the reproductive phase. Regulates the expression of CYP78A11/PLA1, HD3A and MADS1 during reproductive development in rice. May act upstream of CYP78A11/PLA1 during panicle development. Acts independently of the photoperiodic and gibberellin signaling pathways. The chain is GATA transcription factor 15 from Oryza sativa subsp. japonica (Rice).